A 311-amino-acid polypeptide reads, in one-letter code: 4-hydroxy-3-methylbut-2-enyl diphosphate reductase (311 aa).

Cys12 contacts [4Fe-4S] cluster. 2 residues coordinate (2E)-4-hydroxy-3-methylbut-2-enyl diphosphate: His41 and His74. Dimethylallyl diphosphate is bound by residues His41 and His74. Residues His41 and His74 each contribute to the isopentenyl diphosphate site. Cys96 provides a ligand contact to [4Fe-4S] cluster. A (2E)-4-hydroxy-3-methylbut-2-enyl diphosphate-binding site is contributed by His124. Position 124 (His124) interacts with dimethylallyl diphosphate. Isopentenyl diphosphate is bound at residue His124. Catalysis depends on Glu126, which acts as the Proton donor. Thr168 contributes to the (2E)-4-hydroxy-3-methylbut-2-enyl diphosphate binding site. Residue Cys198 participates in [4Fe-4S] cluster binding. 4 residues coordinate (2E)-4-hydroxy-3-methylbut-2-enyl diphosphate: Ser226, Ser227, Asn228, and Ser270. Residues Ser226, Ser227, Asn228, and Ser270 each coordinate dimethylallyl diphosphate. Isopentenyl diphosphate contacts are provided by Ser226, Ser227, Asn228, and Ser270.

It belongs to the IspH family. Requires [4Fe-4S] cluster as cofactor.

It carries out the reaction isopentenyl diphosphate + 2 oxidized [2Fe-2S]-[ferredoxin] + H2O = (2E)-4-hydroxy-3-methylbut-2-enyl diphosphate + 2 reduced [2Fe-2S]-[ferredoxin] + 2 H(+). The enzyme catalyses dimethylallyl diphosphate + 2 oxidized [2Fe-2S]-[ferredoxin] + H2O = (2E)-4-hydroxy-3-methylbut-2-enyl diphosphate + 2 reduced [2Fe-2S]-[ferredoxin] + 2 H(+). The protein operates within isoprenoid biosynthesis; dimethylallyl diphosphate biosynthesis; dimethylallyl diphosphate from (2E)-4-hydroxy-3-methylbutenyl diphosphate: step 1/1. It participates in isoprenoid biosynthesis; isopentenyl diphosphate biosynthesis via DXP pathway; isopentenyl diphosphate from 1-deoxy-D-xylulose 5-phosphate: step 6/6. In terms of biological role, catalyzes the conversion of 1-hydroxy-2-methyl-2-(E)-butenyl 4-diphosphate (HMBPP) into a mixture of isopentenyl diphosphate (IPP) and dimethylallyl diphosphate (DMAPP). Acts in the terminal step of the DOXP/MEP pathway for isoprenoid precursor biosynthesis. The chain is 4-hydroxy-3-methylbut-2-enyl diphosphate reductase from Alcanivorax borkumensis (strain ATCC 700651 / DSM 11573 / NCIMB 13689 / SK2).